The following is a 360-amino-acid chain: N6-Methyl-AMP deaminase (360 aa).

Residues histidine 23 and histidine 25 each coordinate Zn(2+). N(6)-methyl-AMP is bound by residues histidine 25, asparagine 27, histidine 73, 105–108, aspartate 147, and glycine 180; that span reads STPR. Histidine 207 provides a ligand contact to Zn(2+). The N(6)-methyl-AMP site is built by glutamate 210, aspartate 292, and aspartate 293. The active-site Proton donor is glutamate 210. Zn(2+) is bound at residue aspartate 292.

This sequence belongs to the metallo-dependent hydrolases superfamily. Adenosine and AMP deaminases family. As to quaternary structure, monomer. It depends on Zn(2+) as a cofactor.

The enzyme catalyses N(6)-methyl-AMP + H2O + H(+) = IMP + methylamine. Its function is as follows. Catalyzes the hydrolysis of the free cytosolic methylated adenosine nucleotide N(6)-methyl-AMP (N6-mAMP) to produce inositol monophosphate (IMP) and methylamine. Is required for the catabolism of cytosolic N6-mAMP, which is derived from the degradation of mRNA containing N6-methylated adenine (m6A). In Mus musculus (Mouse), this protein is N6-Methyl-AMP deaminase (Mapda).